The chain runs to 308 residues: Ornithine carbamoyltransferase (308 aa).

Carbamoyl phosphate is bound by residues 53–56, Q80, R104, and 131–134; these read STRT and HPCQ. L-ornithine contacts are provided by residues N162, D225, and 229–230; that span reads SM. Carbamoyl phosphate-binding positions include 265-266 and R293; that span reads CL.

The protein belongs to the aspartate/ornithine carbamoyltransferase superfamily. OTCase family.

It is found in the cytoplasm. The catalysed reaction is carbamoyl phosphate + L-ornithine = L-citrulline + phosphate + H(+). Its pathway is amino-acid biosynthesis; L-arginine biosynthesis; L-arginine from L-ornithine and carbamoyl phosphate: step 1/3. In terms of biological role, reversibly catalyzes the transfer of the carbamoyl group from carbamoyl phosphate (CP) to the N(epsilon) atom of ornithine (ORN) to produce L-citrulline. This chain is Ornithine carbamoyltransferase (argF), found in Synechocystis sp. (strain ATCC 27184 / PCC 6803 / Kazusa).